The following is a 170-amino-acid chain: Transcriptional repressor NrdR (170 aa).

A zinc finger lies at 3–34 (CPFCRHPDSRVVDSRTSEDGSSIRRRRQCPEC). The region spanning 46-136 (LSVVKRSGVA…VYRGFSSLED (91 aa)) is the ATP-cone domain. The segment at 148 to 170 (RENEGDPDADGSADAPVRLTTSV) is disordered.

Belongs to the NrdR family. It depends on Zn(2+) as a cofactor.

In terms of biological role, negatively regulates transcription of bacterial ribonucleotide reductase nrd genes and operons by binding to NrdR-boxes. The polypeptide is Transcriptional repressor NrdR (Beutenbergia cavernae (strain ATCC BAA-8 / DSM 12333 / CCUG 43141 / JCM 11478 / NBRC 16432 / NCIMB 13614 / HKI 0122)).